Consider the following 149-residue polypeptide: Alpha-crystallin A chain (149 aa).

The 109-residue stretch at 41–149 folds into the sHSP domain; sequence LFRSVLESGI…DASHGERPIP (109 aa). Positions 89, 91, 96, and 143 each coordinate Zn(2+).

The protein belongs to the small heat shock protein (HSP20) family. In terms of assembly, heteropolymer composed of three CRYAA and one CRYAB subunits. Inter-subunit bridging via zinc ions enhances stability, which is crucial as there is no protein turn over in the lens. Can also form homodimers and homotetramers (dimers of dimers) which serve as the building blocks of homooligomers. Within homooligomers, the zinc-binding motif is created from residues of 3 different molecules. His-89 and Glu-91 from one molecule are ligands of the zinc ion, and His-96 and His-143 residues from additional molecules complete the site with tetrahedral coordination geometry. Part of a complex required for lens intermediate filament formation composed of BFSP1, BFSP2 and CRYAA.

It localises to the cytoplasm. The protein localises to the nucleus. Its function is as follows. Contributes to the transparency and refractive index of the lens. May act as a chaperone, preventing aggregation of various proteins under a wide range of stress conditions. The polypeptide is Alpha-crystallin A chain (CRYAA) (Columba livia (Rock dove)).